The chain runs to 502 residues: Protein GIS3 (502 aa).

The protein localises to the cytoplasm. It localises to the nucleus. This is Protein GIS3 (GIS3) from Saccharomyces cerevisiae (strain ATCC 204508 / S288c) (Baker's yeast).